Here is a 357-residue protein sequence, read N- to C-terminus: Protein RecA (357 aa).

73–80 (GPESSGKT) is a binding site for ATP.

The protein belongs to the RecA family.

The protein localises to the cytoplasm. Its function is as follows. Can catalyze the hydrolysis of ATP in the presence of single-stranded DNA, the ATP-dependent uptake of single-stranded DNA by duplex DNA, and the ATP-dependent hybridization of homologous single-stranded DNAs. It interacts with LexA causing its activation and leading to its autocatalytic cleavage. In Nitratidesulfovibrio vulgaris (strain DSM 19637 / Miyazaki F) (Desulfovibrio vulgaris), this protein is Protein RecA.